A 200-amino-acid polypeptide reads, in one-letter code: High mobility group protein B3 (200 aa).

Residue Lys3 is modified to N6-acetyllysine. 2 consecutive DNA-binding regions (HMG box) follow at residues 9–79 and 93–161; these read PKGK…KDYG and PKRP…ADYK. Cys23 is subject to Cysteine sulfonic acid (-SO3H); alternate. A disulfide bridge links Cys23 with Cys45. N6-acetyllysine occurs at positions 30 and 43. A Cysteine sulfonic acid (-SO3H); alternate modification is found at Cys45. Residues 71-97 are disordered; the sequence is YDREMKDYGPAKGGKKKKDPNAPKRPP. Position 98 is a phosphoserine (Ser98). Cys104 carries the post-translational modification Cysteine sulfonic acid (-SO3H). N6-acetyllysine occurs at positions 112 and 139. Positions 161-200 are disordered; sequence KSKGKFDGAKGPAKVARKKVEEEEEEEEEEEEEEEEEEDE. A compositionally biased stretch (acidic residues) spans 182-200; that stretch reads EEEEEEEEEEEEEEEEEDE.

Belongs to the HMGB family. Reduction/oxidation of cysteine residues Cys-23, Cys-45 and Cys-104 and a possible intramolecular disulfide bond involving Cys-23 and Cys-45 give rise to different redox forms with specific functional activities in various cellular compartments: 1- fully reduced HMGB3 (HMGB3C23hC45hC104h), 2- disulfide HMGB3 (HMGB3C23-C45C104h) and 3- sulfonyl HMGB3 (HMGB3C23soC45soC104so). In terms of tissue distribution, expressed in bone marrow cells, specifically in primitive Lin-, c-kit+, Sca-1+, IL-7Ralpha- cells, and Ter119+ erythroid cells.

It is found in the nucleus. The protein localises to the chromosome. Its subcellular location is the cytoplasm. Its function is as follows. Multifunctional protein with various roles in different cellular compartments. May act in a redox sensitive manner. Associates with chromatin and binds DNA with a preference for non-canonical DNA structures such as single-stranded DNA. Can bend DNA and enhance DNA flexibility by looping thus providing a mechanism to promote activities on various gene promoters. Proposed to be involved in the innate immune response to nucleic acids by acting as a cytoplasmic promiscuous immunogenic DNA/RNA sensor. Negatively regulates B-cell and myeloid cell differentiation. In hematopoietic stem cells may regulate the balance between self-renewal and differentiation. Involved in negative regulation of canonical Wnt signaling. The polypeptide is High mobility group protein B3 (Hmgb3) (Mus musculus (Mouse)).